A 263-amino-acid chain; its full sequence is N-acyl homoserine lactonase AttM (263 aa).

Zn(2+) is bound by residues His-103, His-105, Asp-107, His-108, His-180, Asp-202, and His-247.

The protein belongs to the metallo-beta-lactamase superfamily. Zn(2+) is required as a cofactor.

It catalyses the reaction an N-acyl-L-homoserine lactone + H2O = an N-acyl-L-homoserine + H(+). In Rhizobium johnstonii (strain DSM 114642 / LMG 32736 / 3841) (Rhizobium leguminosarum bv. viciae), this protein is N-acyl homoserine lactonase AttM.